A 177-amino-acid chain; its full sequence is Large ribosomal subunit protein bL9 (177 aa).

The disordered stretch occupies residues 151–177 (VEEEPAEEVEAPAETEVAEDAEEATEA).

The protein belongs to the bacterial ribosomal protein bL9 family.

Binds to the 23S rRNA. The chain is Large ribosomal subunit protein bL9 from Maridesulfovibrio salexigens (strain ATCC 14822 / DSM 2638 / NCIMB 8403 / VKM B-1763) (Desulfovibrio salexigens).